The sequence spans 335 residues: MSATISLQQLTDQLDALEAEAVSAIAAAADADALEQLRVSLLGKKGRLSGVLGAMGKLPSEERPLVGQRANVLKTQVQNLLGERLQVVKAAALADRLLQETIDVTAPASGIPVGHRHPLITTTEQIVDLFSGLGYRVAEGPEVETDHYNFSALNIPEDHPARDMQDTFYLGGNLLLRTHTSPVQIRYLEENPPPVRIVAPGRVYRRDAVDATHSPVFHQVEVLAIDEGLDFSHLRGTVMAFLKAFFGDMPVRFRASYFPFTEPSAEVDVQWRGRWLEVMGCGMVDPAVLEGLGLDPERWSGFAAGLGVERFCMVRHGIDDIRRLYTSDLRFLEQF.

Glu262 is a binding site for Mg(2+).

It belongs to the class-II aminoacyl-tRNA synthetase family. Phe-tRNA synthetase alpha subunit type 1 subfamily. In terms of assembly, tetramer of two alpha and two beta subunits. The cofactor is Mg(2+).

The protein resides in the cytoplasm. The enzyme catalyses tRNA(Phe) + L-phenylalanine + ATP = L-phenylalanyl-tRNA(Phe) + AMP + diphosphate + H(+). The chain is Phenylalanine--tRNA ligase alpha subunit from Prochlorococcus marinus (strain MIT 9313).